A 276-amino-acid polypeptide reads, in one-letter code: Rho-related protein racO (276 aa).

11–18 (GDGLIGKT) is a GTP binding site. The Effector region motif lies at 34-42 (YSSFDSEYL). GTP is bound by residues 60–64 (ENDGF) and 124–127 (IKTD). A disordered region spans residues 199 to 276 (FKNNNNNNNY…NKTTNKCKIS (78 aa)). The span at 200–270 (KNNNNNNNYN…SYKNHNNKTT (71 aa)) shows a compositional bias: low complexity. Cys-273 bears the Cysteine methyl ester mark. A lipid anchor (S-geranylgeranyl cysteine) is attached at Cys-273. The propeptide at 274–276 (KIS) is removed in mature form.

The protein belongs to the small GTPase superfamily. Rho family.

It localises to the cell membrane. This chain is Rho-related protein racO (racO), found in Dictyostelium discoideum (Social amoeba).